The primary structure comprises 283 residues: Light-independent protochlorophyllide reductase iron-sulfur ATP-binding protein (283 aa).

Residues 15 to 20 (GIGKST) and Lys-44 contribute to the ATP site. A Mg(2+)-binding site is contributed by Ser-19. Residues Cys-100 and Cys-134 each coordinate [4Fe-4S] cluster. 185–186 (NR) contributes to the ATP binding site.

This sequence belongs to the NifH/BchL/ChlL family. In terms of assembly, homodimer. Protochlorophyllide reductase is composed of three subunits; ChlL, ChlN and ChlB. [4Fe-4S] cluster serves as cofactor.

The catalysed reaction is chlorophyllide a + oxidized 2[4Fe-4S]-[ferredoxin] + 2 ADP + 2 phosphate = protochlorophyllide a + reduced 2[4Fe-4S]-[ferredoxin] + 2 ATP + 2 H2O. The protein operates within porphyrin-containing compound metabolism; chlorophyll biosynthesis (light-independent). Functionally, component of the dark-operative protochlorophyllide reductase (DPOR) that uses Mg-ATP and reduced ferredoxin to reduce ring D of protochlorophyllide (Pchlide) to form chlorophyllide a (Chlide). This reaction is light-independent. The L component serves as a unique electron donor to the NB-component of the complex, and binds Mg-ATP. The protein is Light-independent protochlorophyllide reductase iron-sulfur ATP-binding protein of Synechococcus sp. (strain JA-3-3Ab) (Cyanobacteria bacterium Yellowstone A-Prime).